Here is a 672-residue protein sequence, read N- to C-terminus: MGIRGLMSFVEDYSNEFFVDLKLRNTKLIIDGYSLFHRLCFNSDLELRYGGDYDLFADVVQKFFESLFVCHICPYVVLDGGCDISDKKLTTLKDRAKEKIQAARSLSLGGGGNVCPLLIREVFIQVLIRLEVCFVQSFSEADRDIMTLANHWNCPVLSSDSDFCIFDLRSGFCSLNSFQWRNLNTIKDTQDYYIPARSFSLNAFCHYFNNMNKALLPLFAVLCGNDHVNLPIMDTFISKVRLPLSSKGRRYHRVLGLLNWLSHFDDPTEALDNVLKSLPKKSRENVKELLCCSMEEYQQSPVKLQDFFQYGSYVCTDASDLGLPEWVLGALAKGQLPPFISDALVLRRTFLHTQVENMQRPNAHRISQPIRQIIYGLLLNGPSHAEDIAQNTLPSQLLAFNEVERIDTNIKTSTVYAKQLLKDQCDLSKLAELPLARRQMLLLEALKVKQVVLESIPTFLKLPIAVTCYWLQSTEAKAKLHHLQALLLGMLREPLHAIVNSPGTEDPQRGGAKMLYEELCQVKAPMRPGPRVDLDTAHVFCQWQSCLQMGLYLNQLLSTPLPEPNLTWLYNGSLVHRLCQQLPASSSVESLLSLCPEAKQLYEHLFNATKSYAPAELFLPKTKSKSKKKRQKKKVASLGTTADAKHWYDRSNRFGPLMPESLEEHVENSELE.

Residues 349–398 (TFLHTQVENMQRPNAHRISQPIRQIIYGLLLNGPSHAEDIAQNTLPSQLL) form an interaction with SHLD2 region.

Belongs to the asteroid family. As to quaternary structure, interacts with SHLD1, SHLD2, SHLD3, RIF1 and MAD2L2/REV7.

Functionally, structure-specific DNA endonuclease that specifically cleaves single-stranded DNA and 3' overhang DNA. Contributes to the control of DNA double-strand break repair choice by antagonizing BRCA1-dependent homologous recombination (HR) and promoting non-homologous end-joining (NHEJ). Recruited to the single-stranded DNA ends by SHLD2 and cleaves the 3' exposed DNA ends, therefore inhibiting DNA end resection (necessary for HR) and promoting DNA end protection (necessary for NHEJ). The sequence is that of Single-strand DNA endonuclease ASTE1 (Aste1) from Mus musculus (Mouse).